A 225-amino-acid chain; its full sequence is Enolase-phosphatase E1 (225 aa).

This sequence belongs to the HAD-like hydrolase superfamily. MasA/MtnC family. As to quaternary structure, monomer. It depends on Mg(2+) as a cofactor.

It catalyses the reaction 5-methylsulfanyl-2,3-dioxopentyl phosphate + H2O = 1,2-dihydroxy-5-(methylsulfanyl)pent-1-en-3-one + phosphate. The protein operates within amino-acid biosynthesis; L-methionine biosynthesis via salvage pathway; L-methionine from S-methyl-5-thio-alpha-D-ribose 1-phosphate: step 3/6. Its pathway is amino-acid biosynthesis; L-methionine biosynthesis via salvage pathway; L-methionine from S-methyl-5-thio-alpha-D-ribose 1-phosphate: step 4/6. Its function is as follows. Bifunctional enzyme that catalyzes the enolization of 2,3-diketo-5-methylthiopentyl-1-phosphate (DK-MTP-1-P) into the intermediate 2-hydroxy-3-keto-5-methylthiopentenyl-1-phosphate (HK-MTPenyl-1-P), which is then dephosphorylated to form the acireductone 1,2-dihydroxy-3-keto-5-methylthiopentene (DHK-MTPene). This Pseudomonas aeruginosa (strain UCBPP-PA14) protein is Enolase-phosphatase E1.